Reading from the N-terminus, the 41-residue chain is Photosystem I reaction center subunit IX (41 aa).

Residues 7-27 traverse the membrane as a helical segment; the sequence is YLSTAPVLLTLWMTFTAGFII.

It belongs to the PsaJ family.

The protein localises to the plastid. Its subcellular location is the chloroplast thylakoid membrane. In terms of biological role, may help in the organization of the PsaE and PsaF subunits. This Trieres chinensis (Marine centric diatom) protein is Photosystem I reaction center subunit IX.